We begin with the raw amino-acid sequence, 465 residues long: 2-methylcitrate synthase, mitochondrial (465 aa).

The transit peptide at 1 to 29 directs the protein to the mitochondrion; that stretch reads MAMTMRSTRHASKLAQTARLALTNSRRYS. Residues Arg74 and Lys192 each contribute to the CoA site. His269 serves as a coordination point for oxaloacetate. Residue Leu304 coordinates CoA. The active site involves His305. Val346, Gly348, and Tyr349 together coordinate CoA. Oxaloacetate is bound by residues His351 and Arg360. His351 is an active-site residue. Thr400, Lys401, and Asn406 together coordinate CoA. The active site involves Asp408. Oxaloacetate contacts are provided by Arg434 and Arg454.

The protein belongs to the citrate synthase family. In terms of assembly, homodimer.

It is found in the mitochondrion matrix. The catalysed reaction is propanoyl-CoA + oxaloacetate + H2O = (2S,3S)-2-methylcitrate + CoA + H(+). It catalyses the reaction oxaloacetate + acetyl-CoA + H2O = citrate + CoA + H(+). It participates in organic acid metabolism; propanoate degradation. Its function is as follows. Component of the methylcitrate cycle that catalyzes the synthesis of (2S,3S)-2-methylcitrate from propionyl-CoA and oxaloacetate. Plays an important role in detoxification of propionyl-CoA, an inhibitor of both primary and secondary metabolism. Also has citrate synthase activity using as substrates acetyl-CoA and oxaloacetate. Plays a key role in the estabishment of invasive pulmonary aspergillosis. The polypeptide is 2-methylcitrate synthase, mitochondrial (Aspergillus fumigatus (strain CBS 144.89 / FGSC A1163 / CEA10) (Neosartorya fumigata)).